The chain runs to 910 residues: MSRFFANGSDSESESSEDEIQATNFNKASAFQFSDDEEEVKRVVRSTKEKRYENLTSIIKTIRNHKKIKDIPNTLSSFEDLTRAYQKALPVISKEENGITPRFYIRCLAELEDFINEVWEDREGRKNLSKNNSKSLGTLRQKVRKYIKDFEDDLSRFREAPDQESEAEDEVVALESDGGDAGDDSDSGVKPTEAAPKAVKTAPAKAAPADDDDSDDSIDWDSDSESETESSDDENQYQNMRERFLKRTTEKEEKDDDKRKDKRKEQKIKIRKRAEDDEDGEWETVVKGHVVEKPKMFEKDAEIDVPLVLAKLLEIMSARGKKRTDRRLQIDLLFELRDISDQHNLGTAVSVKIHFNIISAIYDYNQKISEPMKLEHWALLLEVMQSMMKLLLANADIIMSESVAEEHEEYVTAPFYVRGCPLAAVERLDDEFVKLLKECDPHSNDYVSRLKDEVNVVKTIELVLQYFERSGTNNERCRIYLRKIEHLYYKFDPEVLKKKRGEVPATTSTSVDVMDKLCKFIYAKDDTDRIRTRAILAHIYHHAMHDNWFQARDLVLMSHLQDNIDAADPATRILYNRMMANLGLCAFRQENVKDAHHCLVDLMVTGKPKELLAQGLLPQRQHERSAEQEKIEKQRQMPFHMHINLELLECVYLVSAMLLEIPYIAAHEFDARRRMISKTFYQQLRSSERQSLVGPPESMREHVVAAAKAMRCGNWQACANFIVNKKMNTKVWDLFYESDRVREMLTKFIKEESLRTYLFTYSNVYTSISIPSLAQMYELPVPKVHSIISKMIINEELMASLDDPSETVVMHRSEPSRLQALAMQFVDKVTNLVDVNEKVFDMKQGNFFQRGNMGNRGDRGYNRNQNNQGGNWLGQRRDRNNRNRNQRGHHKNNQDRQQQQQQQVQTIDEE.

The interval methionine 1–glutamine 21 is disordered. Positions serine 11–isoleucine 20 are enriched in acidic residues. A phosphoserine mark is found at serine 34, serine 165, serine 176, and serine 185. A disordered region spans residues phenylalanine 157–aspartate 279. Positions aspartate 162–aspartate 186 are enriched in acidic residues. Residues glycine 188–alanine 207 are compositionally biased toward low complexity. Positions alanine 209–asparagine 235 are enriched in acidic residues. The span at methionine 240 to isoleucine 268 shows a compositional bias: basic and acidic residues. The 177-residue stretch at phenylalanine 639–proline 815 folds into the PCI domain. A disordered region spans residues phenylalanine 847–glutamate 910. Over residues asparagine 862 to glycine 874 the composition is skewed to low complexity. Residues arginine 882–lysine 891 show a composition bias toward basic residues. A compositionally biased stretch (low complexity) spans aspartate 895 to glutamate 910.

It belongs to the eIF-3 subunit C family. In terms of assembly, component of the eukaryotic translation initiation factor 3 (eIF-3) complex. The eIF-3 complex interacts with pix.

It is found in the cytoplasm. Component of the eukaryotic translation initiation factor 3 (eIF-3) complex, which is involved in protein synthesis of a specialized repertoire of mRNAs and, together with other initiation factors, stimulates binding of mRNA and methionyl-tRNAi to the 40S ribosome. The eIF-3 complex specifically targets and initiates translation of a subset of mRNAs involved in cell proliferation. The chain is Eukaryotic translation initiation factor 3 subunit C from Drosophila erecta (Fruit fly).